The following is a 257-amino-acid chain: Triosephosphate isomerase (257 aa).

Residue 9–11 (NWK) participates in substrate binding. Histidine 95 acts as the Electrophile in catalysis. Residue glutamate 168 is the Proton acceptor of the active site. Substrate-binding positions include glycine 174, serine 213, and 234–235 (GG).

Belongs to the triosephosphate isomerase family. As to quaternary structure, homodimer.

It is found in the cytoplasm. The enzyme catalyses D-glyceraldehyde 3-phosphate = dihydroxyacetone phosphate. The protein operates within carbohydrate biosynthesis; gluconeogenesis. It functions in the pathway carbohydrate degradation; glycolysis; D-glyceraldehyde 3-phosphate from glycerone phosphate: step 1/1. Its function is as follows. Involved in the gluconeogenesis. Catalyzes stereospecifically the conversion of dihydroxyacetone phosphate (DHAP) to D-glyceraldehyde-3-phosphate (G3P). The protein is Triosephosphate isomerase of Acidithiobacillus ferrooxidans (strain ATCC 23270 / DSM 14882 / CIP 104768 / NCIMB 8455) (Ferrobacillus ferrooxidans (strain ATCC 23270)).